The following is a 254-amino-acid chain: UPF0246 protein Fphi_1075 (254 aa).

This sequence belongs to the UPF0246 family.

The polypeptide is UPF0246 protein Fphi_1075 (Francisella philomiragia subsp. philomiragia (strain ATCC 25017 / CCUG 19701 / FSC 153 / O#319-036)).